A 338-amino-acid polypeptide reads, in one-letter code: MKVYYDKDADLSLIKKKKIAIIGYGSQGHAHANNLNDSGVEVIIGLRKDGASWDKAKKAGLTVKEVSEAVKDADIVMLLLPDEQMASIYQTEVEPALKKNATLAFAHGFNIHYGQIIPREDLDIIMIAPKGPGHLVRSTYIQGGGVPSLIAVHQDKSGKARDLALSYAAANGGTRGGVIETTFKEETETDLFGEQVVLCGGLTSLIQAGFETLVEAGYAPEMAYFECLHEVKLIVDLIYEGGIANMRYSVSNNAEYGDVSRGPRIITEATRNEMRKILREIQTGEYAREFILEHRAGAPVLKSSRRLASEHLIETVGSRLRDMMPWIKKNKLVDQAKN.

In terms of domain architecture, KARI N-terminal Rossmann spans 1–181 (MKVYYDKDAD…GGTRGGVIET (181 aa)). NADP(+) is bound by residues 24 to 27 (YGSQ), Arg47, and Ser52. The active site involves His107. NADP(+) is bound at residue Gly133. Positions 182 to 327 (TFKEETETDL…SRLRDMMPWI (146 aa)) constitute a KARI C-terminal knotted domain. Residues Asp190, Glu194, Glu226, and Glu230 each coordinate Mg(2+). A substrate-binding site is contributed by Ser251.

It belongs to the ketol-acid reductoisomerase family. Mg(2+) is required as a cofactor.

The enzyme catalyses (2R)-2,3-dihydroxy-3-methylbutanoate + NADP(+) = (2S)-2-acetolactate + NADPH + H(+). The catalysed reaction is (2R,3R)-2,3-dihydroxy-3-methylpentanoate + NADP(+) = (S)-2-ethyl-2-hydroxy-3-oxobutanoate + NADPH + H(+). The protein operates within amino-acid biosynthesis; L-isoleucine biosynthesis; L-isoleucine from 2-oxobutanoate: step 2/4. Its pathway is amino-acid biosynthesis; L-valine biosynthesis; L-valine from pyruvate: step 2/4. Functionally, involved in the biosynthesis of branched-chain amino acids (BCAA). Catalyzes an alkyl-migration followed by a ketol-acid reduction of (S)-2-acetolactate (S2AL) to yield (R)-2,3-dihydroxy-isovalerate. In the isomerase reaction, S2AL is rearranged via a Mg-dependent methyl migration to produce 3-hydroxy-3-methyl-2-ketobutyrate (HMKB). In the reductase reaction, this 2-ketoacid undergoes a metal-dependent reduction by NADPH to yield (R)-2,3-dihydroxy-isovalerate. This Nitrosomonas eutropha (strain DSM 101675 / C91 / Nm57) protein is Ketol-acid reductoisomerase (NADP(+)).